The sequence spans 523 residues: Keratin, type II cytoskeletal 71 (523 aa).

Residues 1-129 are head; it reads MSRQFTCKSG…DPEIQKVRAQ (129 aa). Residues 130 to 165 form a coil 1A region; that stretch reads EREQIKALNNKFASFIDKVRFLEQQNQVLETKWELL. In terms of domain architecture, IF rod spans 130-443; that stretch reads EREQIKALNN…KLLESEECRM (314 aa). Residues 166–184 form a linker 1 region; that stretch reads QQLDLNNCKNNLEPILEGY. Residues 185 to 276 are coil 1B; the sequence is ISNLRKQLET…CLFEAEITQI (92 aa). A linker 12 region spans residues 277 to 300; it reads QSHISDMSVILSMDNNRNLDLDSI. The segment at 301–439 is coil 2; sequence IDEVRTQYEE…ATYRKLLESE (139 aa). The interval 440 to 523 is tail; it reads ECRMSGEFPS…LSAPSKKTSR (84 aa). Residues 492 to 523 form a disordered region; that stretch reads GGEGRSRGSANDYKDTLGKGSSLSAPSKKTSR. The segment covering 493 to 508 has biased composition (basic and acidic residues); the sequence is GEGRSRGSANDYKDTL. A compositionally biased stretch (polar residues) spans 510–523; the sequence is KGSSLSAPSKKTSR.

This sequence belongs to the intermediate filament family. Heterodimer of a type I and a type II keratin. Associates with KRT16 and/or KRT17. As to expression, highly expressed in hair follicles from scalp. Specifically expressed in the inner root sheath (IRS) of the hair follicle. Present in the all 3 IRS layers: the cuticle, the Henle and the Huxley layers. Also detected in the pseudopods of specialized Huxley cells, termed Fluegelzellen, along the area of differentiated Henle cells (at protein level).

Its subcellular location is the cytoplasm. It is found in the cytoskeleton. Its function is as follows. Plays a central role in hair formation. Essential component of keratin intermediate filaments in the inner root sheath (IRS) of the hair follicle. In Homo sapiens (Human), this protein is Keratin, type II cytoskeletal 71 (KRT71).